We begin with the raw amino-acid sequence, 64 residues long: Small ribosomal subunit protein eS17 (64 aa).

It belongs to the eukaryotic ribosomal protein eS17 family.

The sequence is that of Small ribosomal subunit protein eS17 from Methanospirillum hungatei JF-1 (strain ATCC 27890 / DSM 864 / NBRC 100397 / JF-1).